Reading from the N-terminus, the 313-residue chain is 4-diphosphocytidyl-2-C-methyl-D-erythritol kinase (313 aa).

The active site involves Lys10. Residue 95–105 (PVTAGLGGGSS) coordinates ATP. Asp136 is a catalytic residue. Positions 289–313 (HPRVSPWRSPRSASSRSTRRSSRPT) are disordered. The segment covering 292-304 (VSPWRSPRSASSR) has biased composition (low complexity).

This sequence belongs to the GHMP kinase family. IspE subfamily.

It carries out the reaction 4-CDP-2-C-methyl-D-erythritol + ATP = 4-CDP-2-C-methyl-D-erythritol 2-phosphate + ADP + H(+). It functions in the pathway isoprenoid biosynthesis; isopentenyl diphosphate biosynthesis via DXP pathway; isopentenyl diphosphate from 1-deoxy-D-xylulose 5-phosphate: step 3/6. In terms of biological role, catalyzes the phosphorylation of the position 2 hydroxy group of 4-diphosphocytidyl-2C-methyl-D-erythritol. This is 4-diphosphocytidyl-2-C-methyl-D-erythritol kinase from Anaeromyxobacter dehalogenans (strain 2CP-1 / ATCC BAA-258).